The following is a 247-amino-acid chain: Cell division protein ZapD (247 aa).

The protein belongs to the ZapD family. In terms of assembly, interacts with FtsZ.

It is found in the cytoplasm. In terms of biological role, cell division factor that enhances FtsZ-ring assembly. Directly interacts with FtsZ and promotes bundling of FtsZ protofilaments, with a reduction in FtsZ GTPase activity. This chain is Cell division protein ZapD, found in Klebsiella pneumoniae subsp. pneumoniae (strain ATCC 700721 / MGH 78578).